Here is a 435-residue protein sequence, read N- to C-terminus: Serine--tRNA ligase (435 aa).

233 to 235 is an L-serine binding site; that stretch reads TAE. 264–266 provides a ligand contact to ATP; that stretch reads RAE. Residue glutamate 287 coordinates L-serine. Position 351–354 (351–354) interacts with ATP; it reads EISS. Serine 386 contacts L-serine.

It belongs to the class-II aminoacyl-tRNA synthetase family. Type-1 seryl-tRNA synthetase subfamily. In terms of assembly, homodimer. The tRNA molecule binds across the dimer.

The protein resides in the cytoplasm. The catalysed reaction is tRNA(Ser) + L-serine + ATP = L-seryl-tRNA(Ser) + AMP + diphosphate + H(+). The enzyme catalyses tRNA(Sec) + L-serine + ATP = L-seryl-tRNA(Sec) + AMP + diphosphate + H(+). It participates in aminoacyl-tRNA biosynthesis; selenocysteinyl-tRNA(Sec) biosynthesis; L-seryl-tRNA(Sec) from L-serine and tRNA(Sec): step 1/1. Its function is as follows. Catalyzes the attachment of serine to tRNA(Ser). Is also able to aminoacylate tRNA(Sec) with serine, to form the misacylated tRNA L-seryl-tRNA(Sec), which will be further converted into selenocysteinyl-tRNA(Sec). The chain is Serine--tRNA ligase from Anaeromyxobacter sp. (strain K).